The sequence spans 342 residues: Small GTPase LIP1 (342 aa).

The tract at residues 12–285 (KEQILAPLCG…FHGDPYKYNN (274 aa)) is small GTPase-like. GTP contacts are provided by residues 29-36 (GDSGVGKT), 90-94 (DVSGH), and 160-163 (NKAD). Disordered stretches follow at residues 274-313 (TSFHGDPYKYNNTIPPLPAQRNLTPPPTLYPQQPVSTPDN) and 323-342 (SVQETTNNGSARSKRMDINV). Over residues 323–333 (SVQETTNNGSA) the composition is skewed to polar residues.

Belongs to the small GTPase superfamily.

The protein resides in the nucleus. The protein localises to the cytoplasm. Functionally, functional small GTPase that acts as a negative factor controlling the light-dependent period shortening of circadian rhythms and light-induced phase resetting during the subjective night. May protect the clock from excessive or mistimed light. Suppresses red and blue light-mediated photomorphogenesis and is required for light-controlled inhibition of endoreplication and tolerance to salt stress. The entrainment of the circadian clock is independent from the other pleiotropic effects. Could be a regulator of seedling establishment. This chain is Small GTPase LIP1, found in Arabidopsis thaliana (Mouse-ear cress).